We begin with the raw amino-acid sequence, 771 residues long: ATP-dependent RNA helicase DRS1 (771 aa).

3 disordered regions span residues 1-96, 109-128, and 134-233; these read MAKK…LDGF, VESNGDVTKKPISKDVDLDG, and GGLA…KPVE. Residues 28 to 46 show a composition bias toward acidic residues; that stretch reads SDSEGENEIPDLEEESEVD. Positions 33 to 84 form a coiled coil; it reads ENEIPDLEEESEVDQELKEEEKPKPKPKPKSKKNKKNKDINNDQEKTEEQEE. Over residues 47-56 the composition is skewed to basic and acidic residues; it reads QELKEEEKPK. A compositionally biased stretch (basic residues) spans 57–68; the sequence is PKPKPKSKKNKK. Positions 69 to 79 are enriched in basic and acidic residues; it reads NKDINNDQEKT. Over residues 85–96 the composition is skewed to polar residues; it reads INPNFTFSLDGF. 2 stretches are compositionally biased toward acidic residues: residues 149–182 and 197–233; these read KNDEVESEEVEEVEEDDEDEENEQEGDDDDDELA and ADDDQDEQEPEDDDEGVEADMDEEYPGSDQEDEKPVE. A Q motif motif is present at residues 258–286; it reads TTFQSLQLSRPVLKGLSQLGYTKPSPIQS. The Helicase ATP-binding domain maps to 289–465; the sequence is IPIALLGKDI…QLSLQKPVRV (177 aa). 302–309 contacts ATP; sequence AVTGSGKT. The DEAD box signature appears at 412 to 415; sequence DEAD. The Helicase C-terminal domain occupies 476–643; sequence KLVQEFVRIR…RNSKQGKAVS (168 aa). Residues 695 to 717 show a composition bias toward basic and acidic residues; the sequence is EKEIQSRPRRTWFESEKDKKHQT. A disordered region spans residues 695 to 771; sequence EKEIQSRPRR…KPKSNGKNKK (77 aa). Composition is skewed to basic residues over residues 725–736 and 759–771; these read KHGKKVNSHKRK and VQKKPKSNGKNKK.

This sequence belongs to the DEAD box helicase family. DDX27/DRS1 subfamily. As to quaternary structure, associates with pre-ribosomal particles.

The protein resides in the nucleus. It is found in the nucleolus. It carries out the reaction ATP + H2O = ADP + phosphate + H(+). ATP-binding RNA helicase involved in ribosome assembly. The polypeptide is ATP-dependent RNA helicase DRS1 (DRS1) (Debaryomyces hansenii (strain ATCC 36239 / CBS 767 / BCRC 21394 / JCM 1990 / NBRC 0083 / IGC 2968) (Yeast)).